Consider the following 189-residue polypeptide: GTP cyclohydrolase 1 (189 aa).

Residues Cys-78, His-81, and Cys-150 each contribute to the Zn(2+) site.

Belongs to the GTP cyclohydrolase I family. In terms of assembly, toroid-shaped homodecamer, composed of two pentamers of five dimers.

The catalysed reaction is GTP + H2O = 7,8-dihydroneopterin 3'-triphosphate + formate + H(+). It participates in cofactor biosynthesis; 7,8-dihydroneopterin triphosphate biosynthesis; 7,8-dihydroneopterin triphosphate from GTP: step 1/1. This chain is GTP cyclohydrolase 1, found in Listeria innocua serovar 6a (strain ATCC BAA-680 / CLIP 11262).